The sequence spans 65 residues: Muscarinic toxin-like protein 1 (65 aa).

Intrachain disulfides connect Cys-3–Cys-24, Cys-17–Cys-42, Cys-46–Cys-57, and Cys-58–Cys-63.

The protein belongs to the three-finger toxin family. Short-chain subfamily. Type C muscarinic toxin sub-subfamily. In terms of assembly, monomer. Expressed by the venom gland.

It localises to the secreted. Binds weakly to the muscarinic acetylcholine receptor (CHRM). This Naja kaouthia (Monocled cobra) protein is Muscarinic toxin-like protein 1.